The chain runs to 215 residues: 3-isopropylmalate dehydratase small subunit (215 aa).

It belongs to the LeuD family. LeuD type 1 subfamily. Heterodimer of LeuC and LeuD.

The catalysed reaction is (2R,3S)-3-isopropylmalate = (2S)-2-isopropylmalate. The protein operates within amino-acid biosynthesis; L-leucine biosynthesis; L-leucine from 3-methyl-2-oxobutanoate: step 2/4. In terms of biological role, catalyzes the isomerization between 2-isopropylmalate and 3-isopropylmalate, via the formation of 2-isopropylmaleate. This is 3-isopropylmalate dehydratase small subunit from Saccharophagus degradans (strain 2-40 / ATCC 43961 / DSM 17024).